A 296-amino-acid chain; its full sequence is NAD kinase (296 aa).

The active-site Proton acceptor is the D72. Residues 72 to 73 (DG), 146 to 147 (ND), R157, K174, D176, 187 to 192 (TAYALS), and Q247 contribute to the NAD(+) site.

The protein belongs to the NAD kinase family. It depends on a divalent metal cation as a cofactor.

It localises to the cytoplasm. It carries out the reaction NAD(+) + ATP = ADP + NADP(+) + H(+). Involved in the regulation of the intracellular balance of NAD and NADP, and is a key enzyme in the biosynthesis of NADP. Catalyzes specifically the phosphorylation on 2'-hydroxyl of the adenosine moiety of NAD to yield NADP. This Pseudomonas putida (strain ATCC 700007 / DSM 6899 / JCM 31910 / BCRC 17059 / LMG 24140 / F1) protein is NAD kinase.